Here is a 505-residue protein sequence, read N- to C-terminus: Aspartyl/glutamyl-tRNA(Asn/Gln) amidotransferase subunit B (505 aa).

Positions 220-241 are disordered; it reads NVSLRPRPAPGDPDAPFGTRSE.

Belongs to the GatB/GatE family. GatB subfamily. As to quaternary structure, heterotrimer of A, B and C subunits.

The enzyme catalyses L-glutamyl-tRNA(Gln) + L-glutamine + ATP + H2O = L-glutaminyl-tRNA(Gln) + L-glutamate + ADP + phosphate + H(+). It carries out the reaction L-aspartyl-tRNA(Asn) + L-glutamine + ATP + H2O = L-asparaginyl-tRNA(Asn) + L-glutamate + ADP + phosphate + 2 H(+). Functionally, allows the formation of correctly charged Asn-tRNA(Asn) or Gln-tRNA(Gln) through the transamidation of misacylated Asp-tRNA(Asn) or Glu-tRNA(Gln) in organisms which lack either or both of asparaginyl-tRNA or glutaminyl-tRNA synthetases. The reaction takes place in the presence of glutamine and ATP through an activated phospho-Asp-tRNA(Asn) or phospho-Glu-tRNA(Gln). This is Aspartyl/glutamyl-tRNA(Asn/Gln) amidotransferase subunit B from Frankia casuarinae (strain DSM 45818 / CECT 9043 / HFP020203 / CcI3).